A 603-amino-acid chain; its full sequence is Sulfoacetaldehyde acetyltransferase (603 aa).

This sequence belongs to the TPP enzyme family. The cofactor is Mg(2+). Thiamine diphosphate is required as a cofactor.

The catalysed reaction is acetyl phosphate + sulfite + H(+) = sulfoacetaldehyde + phosphate. Catalyzes the degradation of sulfoacetaldehyde into sulfite and acetyl phosphate. Involved in sulfolactate degradation. The polypeptide is Sulfoacetaldehyde acetyltransferase (Roseovarius nubinhibens (strain ATCC BAA-591 / DSM 15170 / ISM)).